The primary structure comprises 327 residues: Pumilio homolog 18 (327 aa).

One can recognise a PUM-HD domain in the interval 1 to 324 (MAVADNPFSM…NIANILDSFR (324 aa)). 6 Pumilio repeats span residues 79–114 (SDSD…FCAA), 115–149 (ILRR…ALYE), 150–185 (RILY…DQLL), 186–222 (ELVA…NIAV), 223–260 (NLYG…ELLG), and 261–295 (CDGD…DLFW).

It localises to the cytoplasm. Functionally, sequence-specific RNA-binding protein that regulates translation and mRNA stability by binding the 3'-UTR of target mRNAs. The chain is Pumilio homolog 18 (APUM18) from Arabidopsis thaliana (Mouse-ear cress).